Consider the following 61-residue polypeptide: Photosystem II reaction center protein K (61 aa).

A propeptide spanning residues 1–24 (MPNILSLTCICFNSVLCPTSFFFA) is cleaved from the precursor. The helical transmembrane segment at 32-52 (IFNPIVDVMPVIPVLFFLLAF) threads the bilayer.

The protein belongs to the PsbK family. As to quaternary structure, PSII is composed of 1 copy each of membrane proteins PsbA, PsbB, PsbC, PsbD, PsbE, PsbF, PsbH, PsbI, PsbJ, PsbK, PsbL, PsbM, PsbT, PsbX, PsbY, PsbZ, Psb30/Ycf12, at least 3 peripheral proteins of the oxygen-evolving complex and a large number of cofactors. It forms dimeric complexes.

The protein resides in the plastid. Its subcellular location is the chloroplast thylakoid membrane. One of the components of the core complex of photosystem II (PSII). PSII is a light-driven water:plastoquinone oxidoreductase that uses light energy to abstract electrons from H(2)O, generating O(2) and a proton gradient subsequently used for ATP formation. It consists of a core antenna complex that captures photons, and an electron transfer chain that converts photonic excitation into a charge separation. The protein is Photosystem II reaction center protein K of Sorghum bicolor (Sorghum).